The chain runs to 501 residues: ATP synthase subunit alpha (501 aa).

170-177 is an ATP binding site; it reads GDRQTGKS.

Belongs to the ATPase alpha/beta chains family. As to quaternary structure, F-type ATPases have 2 components, CF(1) - the catalytic core - and CF(0) - the membrane proton channel. CF(1) has five subunits: alpha(3), beta(3), gamma(1), delta(1), epsilon(1). CF(0) has three main subunits: a(1), b(2) and c(9-12). The alpha and beta chains form an alternating ring which encloses part of the gamma chain. CF(1) is attached to CF(0) by a central stalk formed by the gamma and epsilon chains, while a peripheral stalk is formed by the delta and b chains.

The protein resides in the cell membrane. The enzyme catalyses ATP + H2O + 4 H(+)(in) = ADP + phosphate + 5 H(+)(out). Its function is as follows. Produces ATP from ADP in the presence of a proton gradient across the membrane. The alpha chain is a regulatory subunit. This chain is ATP synthase subunit alpha, found in Acholeplasma laidlawii (strain PG-8A).